We begin with the raw amino-acid sequence, 143 residues long: Sorting nexin-3 (143 aa).

A PX domain is found at 23–140 (NILEIDVINP…SSFLQSPEFK (118 aa)). A 1,2-diacyl-sn-glycero-3-phospho-(1D-myo-inositol-3-phosphate) is bound by residues R66, S68, K92, R97, and R106.

Belongs to the sorting nexin family.

The protein localises to the cytoplasm. The protein resides in the golgi apparatus membrane. It is found in the prevacuolar compartment membrane. Its function is as follows. Required for retention of late Golgi membrane proteins. Component of the retrieval machinery that functions by direct interaction with the cytosolic tails of certain TGN membrane proteins during the sorting/budding process at the prevacuolar compartment. Binds phosphatidylinositol 3-phosphate (PtdIns(P3)). The chain is Sorting nexin-3 (snx3) from Schizosaccharomyces pombe (strain 972 / ATCC 24843) (Fission yeast).